A 103-amino-acid polypeptide reads, in one-letter code: Small ribosomal subunit protein uS10 (103 aa).

This sequence belongs to the universal ribosomal protein uS10 family. Part of the 30S ribosomal subunit.

Involved in the binding of tRNA to the ribosomes. The protein is Small ribosomal subunit protein uS10 of Jannaschia sp. (strain CCS1).